The following is a 580-amino-acid chain: Glutamine--tRNA ligase (580 aa).

A 'HIGH' region motif is present at residues 41-51 (PEPNGYLHIGH). Residues 42 to 44 (EPN) and 48 to 54 (HIGHAKA) each bind ATP. L-glutamine-binding residues include D74 and Y218. Residues T237, 285-286 (RL), and 293-295 (MSK) contribute to the ATP site. The 'KMSKS' region signature appears at 292-296 (VMSKR).

The protein belongs to the class-I aminoacyl-tRNA synthetase family. In terms of assembly, monomer.

It is found in the cytoplasm. The enzyme catalyses tRNA(Gln) + L-glutamine + ATP = L-glutaminyl-tRNA(Gln) + AMP + diphosphate. The sequence is that of Glutamine--tRNA ligase from Xylella fastidiosa (strain 9a5c).